We begin with the raw amino-acid sequence, 716 residues long: Calpain-1 catalytic subunit (716 aa).

Residues 55–354 (LFRDEAFPPV…FTRLEICNLT (300 aa)) enclose the Calpain catalytic domain. 2 residues coordinate Ca(2+): glutamine 109 and aspartate 114. Active-site residues include cysteine 115, histidine 272, and asparagine 296. 2 residues coordinate Ca(2+): aspartate 318 and glutamate 323. Threonine 354 bears the Phosphothreonine mark. A domain III region spans residues 355–528 (PDALKSQRFR…KSAGTQELDD (174 aa)). The linker stretch occupies residues 529–544 (QVQANLPDEQVLSEEE). EF-hand domains are found at residues 543–578 (EEID…IISK), 587–620 (FSLE…NRIR), 617–652 (NRIR…AGFK), and 682–716 (VRLE…TMFA). The interval 545 to 715 (IDENFKSLFR…LFKWLQLTMF (171 aa)) is domain IV. The Ca(2+) site is built by aspartate 600, aspartate 602, asparagine 604, lysine 606, glutamate 611, aspartate 630, aspartate 632, serine 634, serine 636, and glutamate 641.

Belongs to the peptidase C2 family. As to quaternary structure, forms a heterodimer with a small (regulatory) subunit CAPNS1. It depends on Ca(2+) as a cofactor. In terms of processing, undergoes calcium-induced successive autoproteolytic cleavages that generate a membrane-bound 78 kDa active form and an intracellular 75 kDa active form. Calpastatin reduces with high efficiency the transition from 78 kDa to 75 kDa calpain forms.

It localises to the cytoplasm. It is found in the cell membrane. It catalyses the reaction Broad endopeptidase specificity.. Its activity is regulated as follows. Activated by micromolar concentrations of calcium and inhibited by calpastatin. In terms of biological role, calcium-regulated non-lysosomal thiol-protease which catalyzes limited proteolysis of substrates involved in cytoskeletal remodeling and signal transduction. Proteolytically cleaves CTBP1. Cleaves and activates caspase-7 (CASP7). The chain is Calpain-1 catalytic subunit from Bos taurus (Bovine).